Consider the following 119-residue polypeptide: Ribonuclease P protein component (119 aa).

It belongs to the RnpA family. Consists of a catalytic RNA component (M1 or rnpB) and a protein subunit.

The catalysed reaction is Endonucleolytic cleavage of RNA, removing 5'-extranucleotides from tRNA precursor.. Its function is as follows. RNaseP catalyzes the removal of the 5'-leader sequence from pre-tRNA to produce the mature 5'-terminus. It can also cleave other RNA substrates such as 4.5S RNA. The protein component plays an auxiliary but essential role in vivo by binding to the 5'-leader sequence and broadening the substrate specificity of the ribozyme. The polypeptide is Ribonuclease P protein component (Serratia proteamaculans (strain 568)).